A 299-amino-acid chain; its full sequence is Protease HtpX homolog (299 aa).

A run of 2 helical transmembrane segments spans residues 14 to 34 and 39 to 59; these read IVLLIVFFMLLAAIGAAVGYL and LVGGMAIALIIGFIYAFSMIF. Zn(2+) is bound at residue His143. Residue Glu144 is part of the active site. Residue His147 coordinates Zn(2+). The next 2 helical transmembrane spans lie at 158–178 and 198–218; these read IAVALASAVTLISSIGGRMMW and IILLIFSLLAIILAPLAASLV. Residue Glu227 participates in Zn(2+) binding.

Belongs to the peptidase M48B family. Zn(2+) serves as cofactor.

It is found in the cell membrane. The sequence is that of Protease HtpX homolog from Streptococcus mutans serotype c (strain ATCC 700610 / UA159).